The sequence spans 177 residues: MSRVAKSPVEVPAAVTVTLNGQSLSVKGGKGTLALEVHANVEVKHEGNVLTFTPRDGAKQSDALAGTTRALVNNMVVGVSQGFEKKLTLVGVGYRVKAEGNTVNLSLGYSHPVNYVLPQGVSVETPSQTEIVLKSADKQLLGQVAAEIRAFREPEPYKGKGVRYSDEVVLRKEAKKK.

Belongs to the universal ribosomal protein uL6 family. In terms of assembly, part of the 50S ribosomal subunit.

This protein binds to the 23S rRNA, and is important in its secondary structure. It is located near the subunit interface in the base of the L7/L12 stalk, and near the tRNA binding site of the peptidyltransferase center. In Cellvibrio japonicus (strain Ueda107) (Pseudomonas fluorescens subsp. cellulosa), this protein is Large ribosomal subunit protein uL6.